A 670-amino-acid polypeptide reads, in one-letter code: NADH-ubiquinone oxidoreductase chain 5 (670 aa).

The next 19 helical transmembrane spans lie at 1–21, 31–51, 81–101, 111–131, 133–153, 178–198, 211–231, 251–271, 283–303, 311–331, 339–359, 375–395, 421–441, 462–482, 519–539, 566–586, 594–614, 629–649, and 650–670; these read MYIV…IFGH, IAVG…YEIL, LTSI…LYSM, TRFF…VTAD, FVQL…LINF, LFFG…SVIF, LLGY…IGVV, TPVS…FLVL, ILNI…TIGI, VIAY…GLLN, LTTH…VIHG, LMPL…GFPF, AIIG…LLIL, TNMV…GYVT, LLPL…YFNI, FDFL…YDVM, LWEK…FTAL, IVQT…TGFI, and YMEL…IKID.

This sequence belongs to the complex I subunit 5 family.

The protein resides in the mitochondrion inner membrane. The enzyme catalyses a ubiquinone + NADH + 5 H(+)(in) = a ubiquinol + NAD(+) + 4 H(+)(out). Core subunit of the mitochondrial membrane respiratory chain NADH dehydrogenase (Complex I) that is believed to belong to the minimal assembly required for catalysis. Complex I functions in the transfer of electrons from NADH to the respiratory chain. The immediate electron acceptor for the enzyme is believed to be ubiquinone. The polypeptide is NADH-ubiquinone oxidoreductase chain 5 (nad5) (Dictyostelium discoideum (Social amoeba)).